A 259-amino-acid polypeptide reads, in one-letter code: Ribosomal RNA small subunit methyltransferase A (259 aa).

S-adenosyl-L-methionine is bound by residues asparagine 13, leucine 15, glycine 39, glutamate 60, aspartate 84, and asparagine 101.

The protein belongs to the class I-like SAM-binding methyltransferase superfamily. rRNA adenine N(6)-methyltransferase family. RsmA subfamily.

The protein localises to the cytoplasm. It catalyses the reaction adenosine(1518)/adenosine(1519) in 16S rRNA + 4 S-adenosyl-L-methionine = N(6)-dimethyladenosine(1518)/N(6)-dimethyladenosine(1519) in 16S rRNA + 4 S-adenosyl-L-homocysteine + 4 H(+). Functionally, specifically dimethylates two adjacent adenosines (A1518 and A1519) in the loop of a conserved hairpin near the 3'-end of 16S rRNA in the 30S particle. May play a critical role in biogenesis of 30S subunits. This Mesomycoplasma hyopneumoniae (strain J / ATCC 25934 / NCTC 10110) (Mycoplasma hyopneumoniae) protein is Ribosomal RNA small subunit methyltransferase A.